The following is an 807-amino-acid chain: Glycerol-3-phosphate acyltransferase (807 aa).

The short motif at 305–310 is the HXXXXD motif element; sequence CHRSHM.

The protein belongs to the GPAT/DAPAT family.

Its subcellular location is the cell inner membrane. It catalyses the reaction sn-glycerol 3-phosphate + an acyl-CoA = a 1-acyl-sn-glycero-3-phosphate + CoA. The protein operates within phospholipid metabolism; CDP-diacylglycerol biosynthesis; CDP-diacylglycerol from sn-glycerol 3-phosphate: step 1/3. This is Glycerol-3-phosphate acyltransferase from Aliivibrio fischeri (strain ATCC 700601 / ES114) (Vibrio fischeri).